We begin with the raw amino-acid sequence, 248 residues long: 2,3-bisphosphoglycerate-dependent phosphoglycerate mutase (248 aa).

Residues 8 to 15 (RHGESQWN), 21 to 22 (TG), arginine 60, 87 to 90 (ERHY), lysine 98, 114 to 115 (RR), and 183 to 184 (GN) contribute to the substrate site. The active-site Tele-phosphohistidine intermediate is the histidine 9. Glutamate 87 acts as the Proton donor/acceptor in catalysis.

It belongs to the phosphoglycerate mutase family. BPG-dependent PGAM subfamily. Homodimer.

It catalyses the reaction (2R)-2-phosphoglycerate = (2R)-3-phosphoglycerate. It participates in carbohydrate degradation; glycolysis; pyruvate from D-glyceraldehyde 3-phosphate: step 3/5. Functionally, catalyzes the interconversion of 2-phosphoglycerate and 3-phosphoglycerate. The sequence is that of 2,3-bisphosphoglycerate-dependent phosphoglycerate mutase from Teredinibacter turnerae (strain ATCC 39867 / T7901).